The chain runs to 107 residues: UPF0145 protein ESA_02470 (107 aa).

The protein belongs to the UPF0145 family.

This is UPF0145 protein ESA_02470 from Cronobacter sakazakii (strain ATCC BAA-894) (Enterobacter sakazakii).